A 199-amino-acid polypeptide reads, in one-letter code: Proteasome subunit beta type-2 (199 aa).

This sequence belongs to the peptidase T1B family. The 26S proteasome consists of a 20S proteasome core and two 19S regulatory subunits. The 20S proteasome core is composed of 28 subunits that are arranged in four stacked rings, resulting in a barrel-shaped structure. The two end rings are each formed by seven alpha subunits, and the two central rings are each formed by seven beta subunits. The catalytic chamber with the active sites is on the inside of the barrel.

It is found in the cytoplasm. The protein localises to the nucleus. Functionally, non-catalytic component of the proteasome, a multicatalytic proteinase complex which is characterized by its ability to cleave peptides with Arg, Phe, Tyr, Leu, and Glu adjacent to the leaving group at neutral or slightly basic pH. The proteasome has an ATP-dependent proteolytic activity. This chain is Proteasome subunit beta type-2 (pbs-4), found in Caenorhabditis elegans.